The following is a 785-amino-acid chain: MNKRSLRVLEFNKVKEILKKYAYSSSAKKLVDELVPYDNTYEINNSLEESNEALEILMKKGNPPIEGLCDIGDILQRAKKGGTLTPEQLLKVLGMLTATRRMQEFFKREEQEVSFPKLEDLAYILAPINDLEKEIERSILSEDEVSDNASTTLYNIRRSLKEKNSSVREKINSIVRSNSKYLQDSLYTIRGDRYVIPVKAEYKSSVPGLVHDQSSTGATLFIEPMGLVNLNNEIKELMLKEKAEIDRVLSALSLKVKMNAEHCESNLKILTNLDFIFSKGKYACELNAIKPMVRDDGIFNIMSGRHPLIEKDKVVPLDVVLGDEFDTLMITGPNTGGKTVTLKTVGLLHIMALSGLLIPASSNSSVSFFKEVFADIGDEQSIEQSLSTFSSHLTNIVNIMEYDNRQSLILFDELGGGTDPAEGAALAIAIIENLSSKGAKLIATTHYSELKAYALNKDRVENASVEFDINTLRPTYRLLIGVPGKSNAFEISKRIGLGKEVIDCAKNYMSKENLEFEGLIRNLQEKSIIAKKDARDAKVIKDEADNLKKKYEQKLERLEKVKDKAYMEAREEAKKIVANAKDEADEILKAMRELEKLGIGSGGRQRLEEERKKLKDSLEEKEKNLYKMKENDGEVLEKVALGMEAFLPSLNQTVVVISMPDNRGEVQVEAGIMKISVKLKDLRKTKQSKVEKVKKKRELKLHFSKVENRIDLRGLDAEEACYRVDKYLDDAYMGNLGEVTIVHGKGTGILRKAINDMLKRHVHVKNYRLGGYGEGGDGATIVELK.

332–339 (GPNTGGKT) serves as a coordination point for ATP. The Smr domain maps to 710-785 (IDLRGLDAEE…GDGATIVELK (76 aa)).

Belongs to the DNA mismatch repair MutS family. MutS2 subfamily. In terms of assembly, homodimer. Binds to stalled ribosomes, contacting rRNA.

Endonuclease that is involved in the suppression of homologous recombination and thus may have a key role in the control of bacterial genetic diversity. Its function is as follows. Acts as a ribosome collision sensor, splitting the ribosome into its 2 subunits. Detects stalled/collided 70S ribosomes which it binds and splits by an ATP-hydrolysis driven conformational change. Acts upstream of the ribosome quality control system (RQC), a ribosome-associated complex that mediates the extraction of incompletely synthesized nascent chains from stalled ribosomes and their subsequent degradation. Probably generates substrates for RQC. This is Endonuclease MutS2 from Clostridium botulinum (strain Eklund 17B / Type B).